Reading from the N-terminus, the 259-residue chain is DNA repair protein RecO (259 aa).

This sequence belongs to the RecO family.

Its function is as follows. Involved in DNA repair and RecF pathway recombination. This is DNA repair protein RecO from Syntrophus aciditrophicus (strain SB).